The chain runs to 315 residues: 3-oxoacyl-[acyl-carrier-protein] reductase 3, chloroplastic (315 aa).

The N-terminal 55 residues, 1–55 (MATTVAATKLTSLKAVKKLGFREIRQVRQWTPLQSSMPHFGSRQSFATSTVVKAQ), are a transit peptide targeting the chloroplast. Residue 77–101 (VTGASRGIGKAIALSLGKAGCKVLV) coordinates NADP(+). A substrate-binding site is contributed by serine 209. The active-site Proton acceptor is the tyrosine 222.

Belongs to the short-chain dehydrogenases/reductases (SDR) family. Homotetramer.

It is found in the plastid. It localises to the chloroplast. It catalyses the reaction a (3R)-hydroxyacyl-[ACP] + NADP(+) = a 3-oxoacyl-[ACP] + NADPH + H(+). Its pathway is lipid metabolism; fatty acid biosynthesis. This Brassica napus (Rape) protein is 3-oxoacyl-[acyl-carrier-protein] reductase 3, chloroplastic (bkr3).